The sequence spans 209 residues: Ion-translocating oxidoreductase complex subunit G (209 aa).

Topologically, residues 1–8 (MLTAIRKN) are cytoplasmic. A helical membrane pass occupies residues 9 to 29 (GLILAVFACVSTGLVALTYAL). Over 30–209 (TAEQIQQQEQ…HNQPNPCEGQ (180 aa)) the chain is Periplasmic. Thr-175 bears the FMN phosphoryl threonine mark.

It belongs to the RnfG family. In terms of assembly, the complex is composed of six subunits: RnfA, RnfB, RnfC, RnfD, RnfE and RnfG. FMN is required as a cofactor.

It localises to the cell inner membrane. Part of a membrane-bound complex that couples electron transfer with translocation of ions across the membrane. The chain is Ion-translocating oxidoreductase complex subunit G from Vibrio cholerae serotype O1 (strain ATCC 39541 / Classical Ogawa 395 / O395).